The sequence spans 231 residues: Succinate dehydrogenase subunit 5, mitochondrial (231 aa).

The N-terminal 63 residues, 1–63 (MAAALRSSCA…AFSWNLRRLF (63 aa)), are a transit peptide targeting the mitochondrion.

As to quaternary structure, component of complex II composed of eight subunits in plants: four classical SDH subunits SDH1, SDH2, SDH3 and SDH4 (a flavoprotein (FP), an iron-sulfur protein (IP), and a cytochrome b composed of a large and a small subunit.), as well as four subunits unknown in mitochondria from bacteria and heterotrophic eukaryotes.

It is found in the mitochondrion inner membrane. Its pathway is carbohydrate metabolism; tricarboxylic acid cycle. The protein is Succinate dehydrogenase subunit 5, mitochondrial of Oryza sativa subsp. japonica (Rice).